Reading from the N-terminus, the 792-residue chain is Phosphatidylinositol 4-phosphate 5-kinase type-1 sktl (792 aa).

The span at M1–Q21 shows a compositional bias: basic and acidic residues. Disordered stretches follow at residues M1–T74, T105–G139, A423–E446, T577–A612, and A640–S714. Polar residues-rich tracts occupy residues Q52 to P62 and T105 to G131. One can recognise a PIPK domain in the interval Q155–V573. Residues S642–N658 are compositionally biased toward low complexity. The span at E678 to D702 shows a compositional bias: polar residues.

Interacts with ash2 (via B30.2/SPRY domain); the interaction is direct and seems to be specific for ash2 isoform B.

Its subcellular location is the cytoplasm. It localises to the cell cortex. The protein resides in the nucleus. The protein localises to the chromosome. It is found in the apical cell membrane. Its subcellular location is the cell projection. It localises to the cilium. The protein resides in the flagellum membrane. The catalysed reaction is a 1,2-diacyl-sn-glycero-3-phospho-(1D-myo-inositol 4-phosphate) + ATP = a 1,2-diacyl-sn-glycero-3-phospho-(1D-myo-inositol-4,5-bisphosphate) + ADP + H(+). Catalyzes the phosphorylation of phosphatidylinositol 4-phosphate (PtdIns[4]P) to form phosphatidylinositol 4,5-bisphosphate (PtdIns[4,5]P(2)), a lipid second messenger that regulates several cellular processes such as signal transduction, vesicle trafficking, actin cytoskeleton dynamics, cell adhesion, and cell motility. PtdIns[4,5]P(2) can directly act as a second messenger or can be utilized as a precursor to generate other second messengers: inositol 1,4,5-trisphosphate (IP3), diacylglycerol (DAG) or phosphatidylinositol-3,4,5-trisphosphate (PtdIns[3,4,5]P(3)). Required for germline development during oogenesis. Sktl is the major phosphatidylinositol 4-phosphate 5-kinase responsible for enrichment of PtdIns[4,5]P(2) in the apical plasma membrane of the oocyte and follicular epithelium cells of the egg chamber during oogenesis. Involved in nuclear anchoring and microtubule organization required for targeted mRNA transport during maintenance of oocyte polarity. The PtdIns[4,5]P(2) produced by sktl is required for maintenance of cellular polarity, prevention of the epithelial-mesenchymal transition process, maintenance of adherens junctions and regulation of apical constriction, probably by affecting polarized cortical recruitment of PAR proteins and their effectors, including baz/bazooka, aPKC, par-1 and l(2)gl. Involved in actin cytoskeleton organization probably through PtdIns[4,5]P(2)-mediated regulation of Moe/Moesin phosphorylation. Involved in PtdIns[4,5]P(2)-mediated apical recruitment of the formin dia/diaphanous in tubular epithelial cells. Involved in anterodorsal cell morphogenesis and eggshell dorsal appendage formation, probably through regulation of apical constriction by PtdIns[4,5]P(2) during tubulogenesis. Required for cell viability or proliferation during wing and eye imaginal disk development. May be involved in cytoskeletal regulation during sensory bristle development. Together with mys/integrin beta localizes to the trailing edge of larval epidermal cells in a JNK signaling-dependent manner during wound healing and is required for setting up cell polarity and re-epithelialization. Required for polarization of elongating spermatid cysts possibly by generation of PtdIns[4,5]P(2) involved in mediating membrane association and orientation of the nucleus-basal body pair. Probably involved in PtdIns[4,5]P(2)-mediated recruitment of exocyst proteins that may mediate membrane addition during spermatid elongation. Involved in maintenance of specialised cell contacts known as slit diaphragms required for nephrocyte morphogenesis and function. Regulates nephrocyte endocytosis, possibly through PtdIns[4,5]P(2)-mediated recruitment of effector proteins. Not required for nervous system development or neurotransmitter release at the neuromuscular junction. Together with ash2 probably plays a role in maintenance of transcriptionally active chromatin through down-regulation of histone H1 hyperphosphorylation. This is Phosphatidylinositol 4-phosphate 5-kinase type-1 sktl from Drosophila melanogaster (Fruit fly).